A 508-amino-acid chain; its full sequence is MSVRRRTHSDDFSYLLEKTRRPSKLNVVQEDPKSAPPQGYSLTTVIIISVLVSLICQHFVPYAVSTLHTVIKNSPKQKSSPPPSNRLNIGFISGNSPEKYAPAVQKPTFLVDPIYDEKWKGIQTAVPVMSTQTDEKRENDPAKVKEAILAAKAAGRSRKDGNLERAMTIMEHAMALAPTNPQILIEMGQIREMHNELVEADQCYVKALAYDPGNSEALVLRARTTPLVSAIDRKMLRSVHDLRDEFNHLQHSTALRRMMRETYFLYVYHTVAIEGNTLSLGQTRAILESGMVIPGKSIREHNEVIGMDAALRFLNCSLLSKEHDEISIDDILEMHRRVLGNADPVEAGRIRTTQVYVGRFTPVSPEYVMEQLKDIVDWLNDESTLTIDPIERAAIAHYKLVLVHPFTDGNGRTARLLLNLIMMRSGFPPVILPVETRAEYYASLHVANLGDLRPFVRYVAKHSEASIQRYIGAMKTSSDNILNSGDSKLTPEESEVSEKIEAECRAGN.

Residues 44–64 (TVIIISVLVSLICQHFVPYAV) form a helical membrane-spanning segment. 2 TPR repeats span residues 147-180 (AILAAKAAGRSRKDGNLERAMTIMEHAMALAPTN) and 181-214 (PQILIEMGQIREMHNELVEADQCYVKALAYDPGN). Positions 270-275 (TVAIEG) match the Inhibitory (S/T)XXXE(G/N) motif motif. Glutamate 274 lines the ATP pocket. In terms of domain architecture, Fido spans 326-461 (ISIDDILEMH…LRPFVRYVAK (136 aa)). Threonine 352 bears the O-AMP-threonine; by autocatalysis mark. 357–360 (VGRF) serves as a coordination point for ATP. Histidine 404 is a catalytic residue. ATP-binding positions include 408-415 (DGNGRTAR), 440-441 (YY), and asparagine 448. Threonine 476 carries the post-translational modification O-AMP-threonine; by autocatalysis. Positions 482–508 (LNSGDSKLTPEESEVSEKIEAECRAGN) are disordered. Basic and acidic residues predominate over residues 496–508 (VSEKIEAECRAGN).

It belongs to the fic family. In terms of assembly, forms homodimers; homodimerization might be required for adenylyltransferase activity. As to expression, ubiquitously expressed, with high expression in the germline.

The protein localises to the endoplasmic reticulum membrane. It is found in the nucleus membrane. The enzyme catalyses L-tyrosyl-[protein] + ATP = O-(5'-adenylyl)-L-tyrosyl-[protein] + diphosphate. The catalysed reaction is L-threonyl-[protein] + ATP = 3-O-(5'-adenylyl)-L-threonyl-[protein] + diphosphate. It carries out the reaction 3-O-(5'-adenylyl)-L-threonyl-[protein] + H2O = L-threonyl-[protein] + AMP + H(+). Its activity is regulated as follows. The side chain of Glu-274 determines which of the two opposing activities (AMPylase or de-AMPylase) will take place. In response to endoplasmic reticulum stress, mediates de-AMPylase activity. Adenylyltransferase activity is inhibited by the inhibitory helix present at the N-terminus: Glu-274 binds ATP and competes with ATP-binding at Arg-415, thereby preventing adenylyltransferase activity. In unstressed cells, disengagement of Glu-274 promotes adenylyltransferase activity. Activation dissociates ATP-binding from Glu-274, allowing ordered binding of the entire ATP moiety with the alpha-phosphate in an orientation that is productive for accepting an incoming target hydroxyl side chain. Protein that can both mediate the addition of adenosine 5'-monophosphate (AMP) to specific residues of target proteins (AMPylation), and the removal of the same modification from target proteins (de-AMPylation), depending on the context. The side chain of Glu-274 determines which of the two opposing activities (AMPylase or de-AMPylase) will take place. Adenylyltransferase that mediates the addition of adenosine 5'-monophosphate (AMP) to specific residues of target proteins. In vivo target proteins include the heat-shock 70 family proteins hsp-1 and hsp-3 and the translation elongation factors eef-1A, eef-1G and eef-2. Can AMPylate core histone H3 in vitro. Can also act as a phosphodiesterase by mediating removal of ATP (de-AMPylation) from target proteins. Decreases susceptibility to P.aeruginosa-mediated killing and might therefore play a role in the innate immune response. This Caenorhabditis elegans protein is Protein adenylyltransferase fic-1.